The primary structure comprises 206 residues: Small ribosomal subunit protein uS7 (206 aa).

Belongs to the universal ribosomal protein uS7 family. As to quaternary structure, component of the small ribosomal subunit.

The protein localises to the cytoplasm. In terms of biological role, component of the small ribosomal subunit. The ribosome is a large ribonucleoprotein complex responsible for the synthesis of proteins in the cell. This is Small ribosomal subunit protein uS7 from Entamoeba histolytica (strain ATCC 30459 / HM-1:IMSS / ABRM).